The following is a 444-amino-acid chain: Deoxyguanosinetriphosphate triphosphohydrolase-like protein (444 aa).

The interval 1–28 (MTDAVWNERRLGEDKQRRNDHRSPYQRD) is disordered. The region spanning 59–250 (RLTHSLEVSQ…MELADDIAYA (192 aa)) is the HD domain.

It belongs to the dGTPase family. Type 2 subfamily.

The sequence is that of Deoxyguanosinetriphosphate triphosphohydrolase-like protein from Shewanella pealeana (strain ATCC 700345 / ANG-SQ1).